A 284-amino-acid chain; its full sequence is Bifunctional protein FolD (284 aa).

Residues 165–167 and Ser190 contribute to the NADP(+) site; that span reads GRS.

The protein belongs to the tetrahydrofolate dehydrogenase/cyclohydrolase family. Homodimer.

It carries out the reaction (6R)-5,10-methylene-5,6,7,8-tetrahydrofolate + NADP(+) = (6R)-5,10-methenyltetrahydrofolate + NADPH. The catalysed reaction is (6R)-5,10-methenyltetrahydrofolate + H2O = (6R)-10-formyltetrahydrofolate + H(+). The protein operates within one-carbon metabolism; tetrahydrofolate interconversion. In terms of biological role, catalyzes the oxidation of 5,10-methylenetetrahydrofolate to 5,10-methenyltetrahydrofolate and then the hydrolysis of 5,10-methenyltetrahydrofolate to 10-formyltetrahydrofolate. The protein is Bifunctional protein FolD of Streptococcus agalactiae serotype Ia (strain ATCC 27591 / A909 / CDC SS700).